The sequence spans 636 residues: Chaperone protein HtpG (636 aa).

The a; substrate-binding stretch occupies residues Met1 to Arg345. Residues Glu346–Arg562 form a b region. The tract at residues Leu563 to Lys636 is c.

Belongs to the heat shock protein 90 family. Homodimer.

It localises to the cytoplasm. Functionally, molecular chaperone. Has ATPase activity. The polypeptide is Chaperone protein HtpG (Dechloromonas aromatica (strain RCB)).